A 151-amino-acid chain; its full sequence is Regulatory protein RecX (151 aa).

It belongs to the RecX family.

The protein resides in the cytoplasm. In terms of biological role, modulates RecA activity. In Herminiimonas arsenicoxydans, this protein is Regulatory protein RecX.